Here is a 213-residue protein sequence, read N- to C-terminus: NADH-quinone oxidoreductase subunit B 1 (213 aa).

Residues cysteine 82, cysteine 83, cysteine 148, and cysteine 177 each coordinate [4Fe-4S] cluster.

Belongs to the complex I 20 kDa subunit family. NDH-1 is composed of 14 different subunits. Subunits NuoB, C, D, E, F, and G constitute the peripheral sector of the complex. It depends on [4Fe-4S] cluster as a cofactor.

It localises to the cell inner membrane. The enzyme catalyses a quinone + NADH + 5 H(+)(in) = a quinol + NAD(+) + 4 H(+)(out). In terms of biological role, NDH-1 shuttles electrons from NADH, via FMN and iron-sulfur (Fe-S) centers, to quinones in the respiratory chain. The immediate electron acceptor for the enzyme in this species is believed to be ubiquinone. Couples the redox reaction to proton translocation (for every two electrons transferred, four hydrogen ions are translocated across the cytoplasmic membrane), and thus conserves the redox energy in a proton gradient. This is NADH-quinone oxidoreductase subunit B 1 from Koribacter versatilis (strain Ellin345).